The sequence spans 203 residues: Cryptic neisserial protein 1 (203 aa).

A signal peptide spans 1 to 18; sequence MRRAILLILTLTVGTSLA.

Belongs to the Cnp family.

It localises to the periplasm. The protein localises to the cytoplasm. The sequence is that of Cryptic neisserial protein 1 from Neisseria gonorrhoeae (strain ATCC 700825 / FA 1090).